The following is an 874-amino-acid chain: Alanine--tRNA ligase (874 aa).

Zn(2+)-binding residues include His562, His566, Cys665, and His669.

It belongs to the class-II aminoacyl-tRNA synthetase family. Zn(2+) serves as cofactor.

Its subcellular location is the cytoplasm. The enzyme catalyses tRNA(Ala) + L-alanine + ATP = L-alanyl-tRNA(Ala) + AMP + diphosphate. In terms of biological role, catalyzes the attachment of alanine to tRNA(Ala) in a two-step reaction: alanine is first activated by ATP to form Ala-AMP and then transferred to the acceptor end of tRNA(Ala). Also edits incorrectly charged Ser-tRNA(Ala) and Gly-tRNA(Ala) via its editing domain. The protein is Alanine--tRNA ligase of Pseudomonas paraeruginosa (strain DSM 24068 / PA7) (Pseudomonas aeruginosa (strain PA7)).